The chain runs to 101 residues: NAD(P)H-quinone oxidoreductase subunit 4L, chloroplastic (101 aa).

3 consecutive transmembrane segments (helical) span residues 2-22 (ILEH…YGLI), 32-52 (MCLE…SDFF), and 61-81 (IFCI…LAIV).

It belongs to the complex I subunit 4L family. NDH is composed of at least 16 different subunits, 5 of which are encoded in the nucleus.

The protein localises to the plastid. It is found in the chloroplast thylakoid membrane. The catalysed reaction is a plastoquinone + NADH + (n+1) H(+)(in) = a plastoquinol + NAD(+) + n H(+)(out). The enzyme catalyses a plastoquinone + NADPH + (n+1) H(+)(in) = a plastoquinol + NADP(+) + n H(+)(out). In terms of biological role, NDH shuttles electrons from NAD(P)H:plastoquinone, via FMN and iron-sulfur (Fe-S) centers, to quinones in the photosynthetic chain and possibly in a chloroplast respiratory chain. The immediate electron acceptor for the enzyme in this species is believed to be plastoquinone. Couples the redox reaction to proton translocation, and thus conserves the redox energy in a proton gradient. The sequence is that of NAD(P)H-quinone oxidoreductase subunit 4L, chloroplastic from Olimarabidopsis pumila (Dwarf rocket).